Consider the following 135-residue polypeptide: Fatty acid-binding protein 5 (135 aa).

Alanine 2 carries the post-translational modification N-acetylalanine. At serine 3 the chain carries Phosphoserine. Residues 24–34 (KELGVGLALRK) carry the Nuclear localization signal motif. Cysteine 43 and arginine 109 together coordinate N-eicosanoyl ethanolamine. Cysteine 120 and cysteine 127 are oxidised to a cystine. A (9Z,12Z)-octadecadienoate-binding site is contributed by 129-131 (RVY). Tyrosine 131 contributes to the N-eicosanoyl ethanolamine binding site. Tyrosine 131 serves as a coordination point for hexadecanoate. The residue at position 131 (tyrosine 131) is a Phosphotyrosine.

It belongs to the calycin superfamily. Fatty-acid binding protein (FABP) family. As to quaternary structure, monomer.

Its subcellular location is the cytoplasm. The protein localises to the nucleus. The protein resides in the synapse. It is found in the postsynaptic density. It localises to the secreted. It catalyses the reaction hexadecanoate(out) = hexadecanoate(in). The enzyme catalyses (9Z,12Z)-octadecadienoate(out) = (9Z,12Z)-octadecadienoate(in). It carries out the reaction (9Z)-octadecenoate(out) = (9Z)-octadecenoate(in). Intracellular carrier for long-chain fatty acids and related active lipids, such as endocannabinoids, that regulate the metabolism and actions of the ligands they bind. In addition to the cytosolic transport, selectively delivers specific fatty acids from the cytosol to the nucleus, wherein they activate nuclear receptors. Delivers retinoic acid to the nuclear receptor peroxisome proliferator-activated receptor delta; which promotes proliferation and survival. May also serve as a synaptic carrier of endocannabinoid at central synapses and thus controls retrograde endocannabinoid signaling. Modulates inflammation by regulating PTGES induction via NF-kappa-B activation, and prostaglandin E2 (PGE2) biosynthesis during inflammation. The polypeptide is Fatty acid-binding protein 5 (Rattus norvegicus (Rat)).